The following is a 758-amino-acid chain: Transmembrane E3 ubiquitin-protein ligase 1 (758 aa).

Residues 1 to 26 (MEIDGNTLVFIIVILFLFFSSPGGDG) form the signal peptide. The Lumenal portion of the chain corresponds to 27–398 (VSSQYEFNQL…YELKIMSIRK (372 aa)). A helical transmembrane segment spans residues 399-419 (HLLFGIALFAAQIYLLLTQMH). Residues 420 to 431 (HTNTPSMVNKIS) lie on the Cytoplasmic side of the membrane. The helical transmembrane segment at 432-452 (FYCFSMINLVDGSLATLYFVA) threads the bilayer. Residues 453–458 (ASVVPE) are Lumenal-facing. Residues 459-479 (LYLPLVISAFSCFILASIFEI) traverse the membrane as a helical segment. Residues 480-523 (RYLISIYASQVNEQNVGIINLLRGNTGTYDENRPRPAFIPDEGS) are Cytoplasmic-facing. Residues 524 to 544 (IGGSLYGRFFFMLIIFTFLIL) form a helical membrane-spanning segment. The Lumenal segment spans residues 545-553 (SSTSWPRQL). Residues 554-574 (RMVFEYILIFILNSYWIPQIF) traverse the membrane as a helical segment. The Cytoplasmic portion of the chain corresponds to 575–602 (RNAVKGIPSRRERARSSIGGNRSQNKMP). Residues 603-623 (LLWSFVIGTTIIRSLPVVYVF) traverse the membrane as a helical segment. Topologically, residues 624 to 635 (TYSSNVFRHHKD) are lumenal. The helical transmembrane segment at 636 to 656 (VHFVVFLSLWLLFQISILYSQ) threads the bilayer. The Cytoplasmic segment spans residues 657 to 758 (DVLGSRWFLP…PVCRSPLPPL (102 aa)). Residues 699 to 752 (CAICMSDVPIYIEEIPETHKVDQHSYMVTPCNHVFHTSCLENWMNYKLQCPVCR) form an RING-type; atypical zinc finger.

Component of the DSC E3 ligase complexes composed of at least TUL1, DSC2, DSC3, UBX3, CDC48 as well as VLD1 for the vacuole-localized complex or GLD1 for the Golgi/endosome-localized complex. Interacts with UBC4.

It is found in the golgi apparatus membrane. The catalysed reaction is S-ubiquitinyl-[E2 ubiquitin-conjugating enzyme]-L-cysteine + [acceptor protein]-L-lysine = [E2 ubiquitin-conjugating enzyme]-L-cysteine + N(6)-ubiquitinyl-[acceptor protein]-L-lysine.. It functions in the pathway protein modification; protein ubiquitination. Catalytic component of the DSC E3 ubiquitin ligase complexes that tag proteins present in Golgi, endosome and vacuole membranes and function in protein homeostasis under non-stress conditions and support a role in protein quality control. Mediates ubiquitination of vacuolar proteins such as CPS1, PPN1, PEP12 and other proteins containing exposed hydrophilic residues within their transmembrane domains, leading to their sorting into internal vesicles in late endosomes. Targets also the unpalmitoylated endosomal SNARE TLG1 to the MVB pathway. In Saccharomyces cerevisiae (strain ATCC 204508 / S288c) (Baker's yeast), this protein is Transmembrane E3 ubiquitin-protein ligase 1 (TUL1).